A 452-amino-acid chain; its full sequence is MKKTLRFAAVVSSLAASAALLVAAPAAAQALGSQGAQLADEVVAVVNNDVITGRELDQRVGLIARRLQQQNAPVPPADQLRAQVLNQMVLERIQVQKAKDDGIRIDDATVQATLQRLAQANGMTLDQYRGRLEAQGVPWSIFTNDARTELMLSKLREREVDGKITVSDAEVANYIASQRGPNASQQQDLRFQHIFIKAPTNAPQADIEAAQKKADALLQQAKSGADFERLAKNNSEANDAKKGGDLGFKSPSALPADVVDAASKLRPGQVNPTLIRVPDGFEIVRLVDRRQSQGASAAAPKIVQTHVRHILLRVGEGKSEGQARQQLVDIRNQVEAGGDFAKFARTYSQDGSASQGGDLGWISPGETVPEFERAMNNLQDGQISQPIRTEYGYHLIQVLNRREAEGSVQQQMDIARQAIGQRKAEQAYADWLRELRDSSYVQYKIGGVGPAN.

The N-terminal stretch at 1-28 (MKKTLRFAAVVSSLAASAALLVAAPAAA) is a signal peptide. PpiC domains lie at 186–288 (QQDL…RLVD) and 302–400 (IVQT…QVLN).

The protein resides in the periplasm. The enzyme catalyses [protein]-peptidylproline (omega=180) = [protein]-peptidylproline (omega=0). In terms of biological role, chaperone involved in the correct folding and assembly of outer membrane proteins. Recognizes specific patterns of aromatic residues and the orientation of their side chains, which are found more frequently in integral outer membrane proteins. May act in both early periplasmic and late outer membrane-associated steps of protein maturation. This chain is Chaperone SurA, found in Burkholderia orbicola (strain AU 1054).